Here is a 579-residue protein sequence, read N- to C-terminus: Laccase-24 (579 aa).

A signal peptide spans 1–23; it reads MARSWSLLLLPFALALVASVAQA. Plastocyanin-like domains lie at 31 to 148 and 159 to 322; these read NVGN…PRGG and EEVV…YGGG. N-linked (GlcNAc...) asparagine glycosylation is found at Asn-34 and Asn-78. 2 residues coordinate Cu cation: His-82 and His-84. Residues Asn-110 and Asn-116 are each glycosylated (N-linked (GlcNAc...) asparagine). Cu cation-binding residues include His-127 and His-129. Asn-204, Asn-209, Asn-219, Asn-241, Asn-312, Asn-337, Asn-348, Asn-398, Asn-405, Asn-444, and Asn-462 each carry an N-linked (GlcNAc...) asparagine glycan. In terms of domain architecture, Plastocyanin-like 3 spans 425–563; that stretch reads DFPDTPPIVF…GMVFEVQNGP (139 aa). Residues His-480, His-483, and His-485 each contribute to the Cu cation site. A glycan (N-linked (GlcNAc...) asparagine) is linked at Asn-500. Cu cation contacts are provided by His-542, Cys-543, His-544, and His-548.

The protein belongs to the multicopper oxidase family. The cofactor is Cu cation.

The protein localises to the secreted. The protein resides in the extracellular space. Its subcellular location is the apoplast. The catalysed reaction is 4 hydroquinone + O2 = 4 benzosemiquinone + 2 H2O. Lignin degradation and detoxification of lignin-derived products. This is Laccase-24 (LAC24) from Oryza sativa subsp. japonica (Rice).